The following is a 498-amino-acid chain: GTPase Der (498 aa).

EngA-type G domains are found at residues 3–167 (PVVA…FDDL) and 210–383 (IKLA…KSAT). GTP contacts are provided by residues 9–16 (GRPNVGKS), 57–61 (DTGGI), 119–122 (NKID), 216–223 (GRPNVGKS), 263–267 (DTAGV), and 328–331 (NKWD). The region spanning 384–468 (TRVGTSVLTR…PIRINFQNSE (85 aa)) is the KH-like domain.

Belongs to the TRAFAC class TrmE-Era-EngA-EngB-Septin-like GTPase superfamily. EngA (Der) GTPase family. As to quaternary structure, associates with the 50S ribosomal subunit.

GTPase that plays an essential role in the late steps of ribosome biogenesis. The chain is GTPase Der from Vibrio parahaemolyticus serotype O3:K6 (strain RIMD 2210633).